The chain runs to 101 residues: NAD(P)H-quinone oxidoreductase subunit 4L, chloroplastic (101 aa).

The next 3 helical transmembrane spans lie at 2–22 (MLEYVLGLSAYLFSIGIYGLI), 32–52 (MCLELILNAVNLNFVTFSDFF), and 61–81 (ILSIFVISIAAAEAAIGPAIV).

The protein belongs to the complex I subunit 4L family. NDH is composed of at least 16 different subunits, 5 of which are encoded in the nucleus.

Its subcellular location is the plastid. The protein localises to the chloroplast thylakoid membrane. It catalyses the reaction a plastoquinone + NADH + (n+1) H(+)(in) = a plastoquinol + NAD(+) + n H(+)(out). It carries out the reaction a plastoquinone + NADPH + (n+1) H(+)(in) = a plastoquinol + NADP(+) + n H(+)(out). Functionally, NDH shuttles electrons from NAD(P)H:plastoquinone, via FMN and iron-sulfur (Fe-S) centers, to quinones in the photosynthetic chain and possibly in a chloroplast respiratory chain. The immediate electron acceptor for the enzyme in this species is believed to be plastoquinone. Couples the redox reaction to proton translocation, and thus conserves the redox energy in a proton gradient. The chain is NAD(P)H-quinone oxidoreductase subunit 4L, chloroplastic from Populus alba (White poplar).